Consider the following 370-residue polypeptide: 1-propanol dehydrogenase PduQ (370 aa).

It belongs to the iron-containing alcohol dehydrogenase family. As to quaternary structure, interacts with PduP, probably via the N-terminus of PduQ. Fe cation is required as a cofactor.

It is found in the bacterial microcompartment. The enzyme catalyses 1-propanol + NAD(+) = propanal + NADH + H(+). Its pathway is polyol metabolism; 1,2-propanediol degradation. In terms of biological role, an iron-dependent alcohol dehydrogenase required for optimal 1,2-propanediol (1,2-PD) degradation. NAD(+) and NADH are regenerated internally within the bacterial microcompartment (BMC) dedicated to 1,2-PD degradation by the PduP and PduQ enzymes, which reduce NAD(+) and oxidize NADH respectively, although there must also be cofactor transport across the BMC. Its function is as follows. Expression of a cosmid containing the full 21-gene pdu operon in E.coli allows E.coli to grow on 1,2-propanediol (1,2-PD) with the appearance of bacterial microcompartments (BMC) in its cytoplasm. Functionally, the 1,2-PD-specific bacterial microcompartment (BMC) concentrates low levels of 1,2-PD catabolic enzymes, concentrates volatile reaction intermediates thus enhancing pathway flux and keeps the level of toxic, mutagenic propionaldehyde low. This Citrobacter freundii protein is 1-propanol dehydrogenase PduQ.